The chain runs to 101 residues: Small ribosomal subunit protein uS14 (101 aa).

This sequence belongs to the universal ribosomal protein uS14 family. Part of the 30S ribosomal subunit. Contacts proteins S3 and S10.

Functionally, binds 16S rRNA, required for the assembly of 30S particles and may also be responsible for determining the conformation of the 16S rRNA at the A site. In Pseudomonas putida (strain ATCC 47054 / DSM 6125 / CFBP 8728 / NCIMB 11950 / KT2440), this protein is Small ribosomal subunit protein uS14.